The sequence spans 436 residues: MGQVLPLVTRLGDRIAIVSGLRTPFARQATAFHGIPAVDLGKMVVGELLARSEIPAEVIEQLVFGQVVQMPEAPNIAREIVLGTGMNVHTDAYSVSRACATSFQAIANVAESLMAGTIRAGIAGGADSSSVLPIGVSKKLARVLVDVNKARTMSQRLKLFSRLRLRDLMPVPPAVAEYSTGLRMGDTAEQMAKTYGITREQQDALAHRSHQRAAQAWSDGKLKEEVMTAFIPPYKQPLAEDNNIRGNSTLADYAKLRPAFDRKHGTVTAANSTPLTDGAAAVILMTESRAKELGLVPLGYLRSYAFTAIDVWQDMLLGPAWSTPLALERAGLTMSDLTLIDMHEAFAAQTLANIQLLGSERFARDVLGRAHATGEVDDSKFNVLGGSIAYGHPFAATGARMITQTLHELRRRGGGFGLVTACAAGGLGAAMVVEAE.

The Acyl-thioester intermediate role is filled by Cys99. Residues His392 and Cys422 each act as proton acceptor in the active site.

It belongs to the thiolase-like superfamily. Thiolase family. In terms of assembly, heterotetramer of two alpha chains (FadJ) and two beta chains (FadI).

Its subcellular location is the cytoplasm. It catalyses the reaction an acyl-CoA + acetyl-CoA = a 3-oxoacyl-CoA + CoA. Its pathway is lipid metabolism; fatty acid beta-oxidation. Catalyzes the final step of fatty acid oxidation in which acetyl-CoA is released and the CoA ester of a fatty acid two carbons shorter is formed. The sequence is that of 3-ketoacyl-CoA thiolase from Escherichia coli (strain SMS-3-5 / SECEC).